The following is a 530-amino-acid chain: MDLSEYGINNVTDVIRNPSFEVLFEEETKPGLEGYEKGIVTELGAVSVDTGIFTGRSPKDKFIVKDDTTRDTLWWADQGKNDNKAIDQKVWNELKVLVTKQLSGKRLFVVDGYCGTNPDTRLCIRVITEVAWQAHFVKNMFIRPTEEELASFKPDFVVMNGAKCTNEKWEEQGLNSENFTVFNLTEKMQLIGGTWYGGEMKKGMFAMMNYFLPLQGIASMHCSANMGENGDVAVFFGLSGTGKTTLSTDPKRALIGDDEHGWDDNGVFNFEGGCYAKTINLSKEAEPDIYNAIRRDALLENVTVRADGAIDFDDNSKTENTRVSYPIYHIENIVKPVSKGGHANKVIFLSADAFGVLPPVSKLTPAQTKYHFLSGFTAKLAGTERGITEPTPTFSACFGNAFLTLHPTQYAEVLVKRMEAAGAEAYLVNTGWNGTGKRISIQDTRAIIDAILNGSIDNAETKEMPIFNLEVPTSLPGVNPEILDPRDTYTDPLQWESKAQDLATRFINNFEKYTDTTEGAELVAAGPQLD.

Residues Arg56, Tyr196, and Lys202 each contribute to the substrate site. ATP contacts are provided by residues Lys202, His221, and 237 to 245 (GLSGTGKTT). Positions 202 and 221 each coordinate Mn(2+). Residue Asp258 participates in Mn(2+) binding. ATP contacts are provided by residues Glu286, Arg322, 438-439 (RI), and Thr444. Arg322 provides a ligand contact to substrate.

This sequence belongs to the phosphoenolpyruvate carboxykinase (ATP) family. As to quaternary structure, monomer. Mn(2+) is required as a cofactor.

The protein localises to the cytoplasm. It catalyses the reaction oxaloacetate + ATP = phosphoenolpyruvate + ADP + CO2. The protein operates within carbohydrate biosynthesis; gluconeogenesis. Functionally, involved in the gluconeogenesis. Catalyzes the conversion of oxaloacetate (OAA) to phosphoenolpyruvate (PEP) through direct phosphoryl transfer between the nucleoside triphosphate and OAA. This is Phosphoenolpyruvate carboxykinase (ATP) from Photobacterium profundum (strain SS9).